Consider the following 312-residue polypeptide: MKSPFWSWNGRIAELKETAKATGVDLEAEIRLLEERLARLRKETYENLTPWQRVQLARAPGRPTTLDVLEKAFQDFIELHGDRAFADDPAIVGGLAYLEGEKVVVVGHQKGRDTKENLQRNFGMPHPEGYRKAMRLMDLADRFGYPFLTFVDTPGAYPGVSAEERGQAWVIAQSIQRMSRLRVPAVTVILGEGGSGGALAIAVANRVLILENAWYSVISPESCAAILWRDAKEAPKAAEALKLTAKDLLQLKVVDAIVPEPEGGAHKDPDRAIRNIKEALLKALEELKGLSPEALYEDRYRRFRSLGAFAEP.

Positions 32 to 286 (LLEERLARLR…KEALLKALEE (255 aa)) constitute a CoA carboxyltransferase C-terminal domain.

It belongs to the AccA family. Acetyl-CoA carboxylase is a heterohexamer composed of biotin carboxyl carrier protein (AccB), biotin carboxylase (AccC) and two subunits each of ACCase subunit alpha (AccA) and ACCase subunit beta (AccD).

It is found in the cytoplasm. It carries out the reaction N(6)-carboxybiotinyl-L-lysyl-[protein] + acetyl-CoA = N(6)-biotinyl-L-lysyl-[protein] + malonyl-CoA. The protein operates within lipid metabolism; malonyl-CoA biosynthesis; malonyl-CoA from acetyl-CoA: step 1/1. Component of the acetyl coenzyme A carboxylase (ACC) complex. First, biotin carboxylase catalyzes the carboxylation of biotin on its carrier protein (BCCP) and then the CO(2) group is transferred by the carboxyltransferase to acetyl-CoA to form malonyl-CoA. This is Acetyl-coenzyme A carboxylase carboxyl transferase subunit alpha from Thermus thermophilus (strain ATCC BAA-163 / DSM 7039 / HB27).